The chain runs to 300 residues: GTPase Era (300 aa).

Positions 4–172 constitute an Era-type G domain; it reads KSGFVALAGK…LEKIKEELPE (169 aa). Residues 12 to 19 form a G1 region; sequence GKPNVGKS. 12 to 19 contacts GTP; the sequence is GKPNVGKS. The segment at 38–42 is G2; that stretch reads QTTRN. Positions 59 to 62 are G3; that stretch reads DTPG. GTP contacts are provided by residues 59 to 63 and 121 to 124; these read DTPGI and NKID. A G4 region spans residues 121-124; that stretch reads NKID. The segment at 151-153 is G5; that stretch reads ISA. In terms of domain architecture, KH type-2 spans 195 to 280; the sequence is IREKIFHLTR…YLDLNVKVKE (86 aa).

This sequence belongs to the TRAFAC class TrmE-Era-EngA-EngB-Septin-like GTPase superfamily. Era GTPase family. Monomer.

It is found in the cytoplasm. It localises to the cell inner membrane. Its function is as follows. An essential GTPase that binds both GDP and GTP, with rapid nucleotide exchange. Plays a role in 16S rRNA processing and 30S ribosomal subunit biogenesis and possibly also in cell cycle regulation and energy metabolism. The chain is GTPase Era from Thermotoga petrophila (strain ATCC BAA-488 / DSM 13995 / JCM 10881 / RKU-1).